We begin with the raw amino-acid sequence, 333 residues long: Glutamyl endopeptidase (333 aa).

The first 29 residues, 1–29 (MKGKFLKVSSLFVATLTTATLVSSPAANA), serve as a signal peptide directing secretion. A propeptide spanning residues 30 to 68 (LSSKAMDNHPQQSQSSKQQTPKIQKGGNLKPLEQREHAN) is cleaved from the precursor. Positions 33–61 (KAMDNHPQQSQSSKQQTPKIQKGGNLKPL) are disordered. Over residues 40-54 (QQSQSSKQQTPKIQK) the composition is skewed to low complexity. Residues His119, Asp161, and Ser237 each act as charge relay system in the active site. A disordered region spans residues 283–333 (FANDDQPNNPDNPDNPNNPDNPNNPDNPNNPNNPDNPDNGDNNNSDNPDAA). Residues 286 to 333 (DDQPNNPDNPDNPNNPDNPNNPDNPNNPNNPDNPDNGDNNNSDNPDAA) are compositionally biased toward low complexity. 11 consecutive repeat copies span residues 289–291 (PNN), 292–294 (PDN), 295–297 (PDN), 298–300 (PNN), 301–303 (PDN), 304–306 (PNN), 307–309 (PDN), 310–312 (PNN), 313–315 (PNN), 316–318 (PDN), and 319–321 (PDN). The interval 289-321 (PNNPDNPDNPNNPDNPNNPDNPNNPNNPDNPDN) is 11 X 3 AA repeats of P-[DN]-N.

It belongs to the peptidase S1B family. Post-translationally, proteolytically cleaved by aureolysin (aur). This cleavage leads to the activation of SspA.

The protein localises to the secreted. The enzyme catalyses Preferential cleavage: Glu-|-Xaa, Asp-|-Xaa.. In terms of biological role, preferentially cleaves peptide bonds on the carboxyl-terminal side of aspartate and glutamate. Along with other extracellular proteases it is involved in colonization and infection of human tissues. Required for proteolytic maturation of thiol protease SspB and inactivation of SspC, an inhibitor of SspB. It is the most important protease for degradation of fibronectin-binding protein (FnBP) and surface protein A, which are involved in adherence to host cells. May also protect bacteria against host defense mechanism by cleaving the immunoglobulin classes IgG, IgA and IgM. May be involved in the stability of secreted lipases. The chain is Glutamyl endopeptidase (sspA) from Staphylococcus aureus (strain MSSA476).